The following is a 301-amino-acid chain: Tyrosine recombinase XerD (301 aa).

The Core-binding (CB) domain maps to 7 to 90 (QFHTTILEQF…ALKVFFLFLK (84 aa)). A Tyr recombinase domain is found at 109–294 (RLPSVLTPQE…AADSLIEKFL (186 aa)). Active-site residues include arginine 153, lysine 175, histidine 246, arginine 249, and histidine 272. Catalysis depends on tyrosine 281, which acts as the O-(3'-phospho-DNA)-tyrosine intermediate.

Belongs to the 'phage' integrase family. XerD subfamily. Forms a cyclic heterotetrameric complex composed of two molecules of XerC and two molecules of XerD.

The protein resides in the cytoplasm. In terms of biological role, site-specific tyrosine recombinase, which acts by catalyzing the cutting and rejoining of the recombining DNA molecules. The XerC-XerD complex is essential to convert dimers of the bacterial chromosome into monomers to permit their segregation at cell division. It also contributes to the segregational stability of plasmids. The sequence is that of Tyrosine recombinase XerD from Chlamydia pneumoniae (Chlamydophila pneumoniae).